A 57-amino-acid polypeptide reads, in one-letter code: Probable antitoxin MazE1 (57 aa).

In terms of assembly, forms a complex with cognate toxin MazF1.

Its function is as follows. Antitoxin component of a type II toxin-antitoxin (TA) system. This Mycobacterium tuberculosis (strain ATCC 25618 / H37Rv) protein is Probable antitoxin MazE1 (mazE1).